The primary structure comprises 177 residues: Ribosome maturation factor RimM (177 aa).

One can recognise a PRC barrel domain in the interval glycine 104–methionine 177.

It belongs to the RimM family. In terms of assembly, binds ribosomal protein uS19.

The protein localises to the cytoplasm. In terms of biological role, an accessory protein needed during the final step in the assembly of 30S ribosomal subunit, possibly for assembly of the head region. Essential for efficient processing of 16S rRNA. May be needed both before and after RbfA during the maturation of 16S rRNA. It has affinity for free ribosomal 30S subunits but not for 70S ribosomes. The polypeptide is Ribosome maturation factor RimM (Magnetococcus marinus (strain ATCC BAA-1437 / JCM 17883 / MC-1)).